Here is a 234-residue protein sequence, read N- to C-terminus: Peptidyl-tRNA hydrolase (234 aa).

Residue tyrosine 14 coordinates tRNA. The Proton acceptor role is filled by histidine 19. 3 residues coordinate tRNA: phenylalanine 64, asparagine 66, and asparagine 112. The segment at 187–234 (TGTKADEEKPKPAKSHIHQARNGVQPKKLPETGPMAEMLKKMFGPKKD) is disordered.

Belongs to the PTH family. In terms of assembly, monomer.

The protein localises to the cytoplasm. The catalysed reaction is an N-acyl-L-alpha-aminoacyl-tRNA + H2O = an N-acyl-L-amino acid + a tRNA + H(+). Functionally, hydrolyzes ribosome-free peptidyl-tRNAs (with 1 or more amino acids incorporated), which drop off the ribosome during protein synthesis, or as a result of ribosome stalling. Catalyzes the release of premature peptidyl moieties from peptidyl-tRNA molecules trapped in stalled 50S ribosomal subunits, and thus maintains levels of free tRNAs and 50S ribosomes. This is Peptidyl-tRNA hydrolase from Allorhizobium ampelinum (strain ATCC BAA-846 / DSM 112012 / S4) (Agrobacterium vitis (strain S4)).